A 574-amino-acid polypeptide reads, in one-letter code: Amino-acid acetyltransferase, mitochondrial (574 aa).

Residues 1-13 constitute a mitochondrion transit peptide; sequence MWRRIFAHELKYD. In terms of domain architecture, N-acetyltransferase spans 392-560; the sequence is KGAKPSSNSP…KRLREFMRSV (169 aa).

The protein belongs to the acetyltransferase family. As to quaternary structure, interacts with the acetylglutamate kinase chain of AGR5,6.

The protein localises to the mitochondrion. The catalysed reaction is L-glutamate + acetyl-CoA = N-acetyl-L-glutamate + CoA + H(+). It participates in amino-acid biosynthesis; L-arginine biosynthesis; N(2)-acetyl-L-ornithine from L-glutamate: step 1/4. Its activity is regulated as follows. Feedback inhibition by L-arginine. Its function is as follows. N-acetylglutamate synthase involved in arginine biosynthesis. This is Amino-acid acetyltransferase, mitochondrial (ARG2) from Saccharomyces cerevisiae (strain RM11-1a) (Baker's yeast).